Here is a 222-residue protein sequence, read N- to C-terminus: Pyridoxal phosphate homeostasis protein (222 aa).

An N6-(pyridoxal phosphate)lysine modification is found at Lys35.

Belongs to the pyridoxal phosphate-binding protein YggS/PROSC family.

Pyridoxal 5'-phosphate (PLP)-binding protein, which is involved in PLP homeostasis. The protein is Pyridoxal phosphate homeostasis protein of Helicobacter pylori (strain ATCC 700392 / 26695) (Campylobacter pylori).